Here is a 327-residue protein sequence, read N- to C-terminus: Delta(6)-protoilludene synthase HYPSUDRAFT_138665 (327 aa).

Positions 79, 215, 219, and 223 each coordinate Mg(2+). A DDXXD motif motif is present at residues 79–83; the sequence is DEHTD. Residues R304 and Y305 each contribute to the (2E,6E)-farnesyl diphosphate site.

Belongs to the terpene synthase family. Mg(2+) serves as cofactor.

It carries out the reaction (2E,6E)-farnesyl diphosphate = Delta(6)-protoilludene + diphosphate. In terms of biological role, terpene cyclase that catalyzes the cyclization of farnesyl diphosphate (FPP) to delta(6)-protoilludene. The polypeptide is Delta(6)-protoilludene synthase HYPSUDRAFT_138665 (Hypholoma sublateritium (strain FD-334 SS-4)).